Here is a 427-residue protein sequence, read N- to C-terminus: UPF0229 protein YeaH (427 aa).

Residues 84–110 form a disordered region; that stretch reads QSDRIERPQGGGGGSGSGQGQASQDGE. Positions 92–102 are enriched in gly residues; sequence QGGGGGSGSGQ.

The protein belongs to the UPF0229 family.

This Escherichia fergusonii (strain ATCC 35469 / DSM 13698 / CCUG 18766 / IAM 14443 / JCM 21226 / LMG 7866 / NBRC 102419 / NCTC 12128 / CDC 0568-73) protein is UPF0229 protein YeaH.